We begin with the raw amino-acid sequence, 1008 residues long: Chitin synthase C (1008 aa).

The interval 1–160 is disordered; it reads MIYEMMVMKR…GGRTIDPNNR (160 aa). The segment covering 10 to 19 has biased composition (low complexity); sequence RSANSRAQNN. Residues 34–45 are compositionally biased toward polar residues; the sequence is ESPSRPVSSLGN. An N-linked (GlcNAc...) asparagine glycan is attached at N312. 5 helical membrane passes run 642–662, 682–702, 717–737, 755–775, and 787–807; these read FMQLIFTYFGLANFYLVFYFI, IFVILRYACILVMCLQFIISM, IIVYSIIMFYTIFCTMYLVVI, LFVNIVMSLLSTVGLYFYASF, and SAAYFIMLPSYICTLQVYAFC. N-linked (GlcNAc...) asparagine glycosylation occurs at N833. Transmembrane regions (helical) follow at residues 887–907 and 910–930; these read MVSIWMVANVILAMAISEVYG and AGGTNIYLAIILWSVVVLALI. N-linked (GlcNAc...) asparagine glycosylation occurs at N961.

This sequence belongs to the chitin synthase family. Class II subfamily.

The protein resides in the cell membrane. The enzyme catalyses [(1-&gt;4)-N-acetyl-beta-D-glucosaminyl](n) + UDP-N-acetyl-alpha-D-glucosamine = [(1-&gt;4)-N-acetyl-beta-D-glucosaminyl](n+1) + UDP + H(+). Functionally, polymerizes chitin, a structural polymer of the cell wall and septum, by transferring the sugar moiety of UDP-GlcNAc to the non-reducing end of the growing chitin polymer. Involved in cell wall integrity and mycelial morphology. Plays an important role in septal growth or maintenance. Acts as a positive regulator of conidiation, cellular responses to oxidative stresses, and the production of malic acid. Negatively regulates the citric acid production. The polypeptide is Chitin synthase C (Aspergillus niger (strain ATCC MYA-4892 / CBS 513.88 / FGSC A1513)).